Consider the following 432-residue polypeptide: MGGCMSTPEAPKKTAETKQVPSTSTSSRPPQASTSATATAAGAGTSAANGTANGIKGDTTATNRVGTSGGQGLAAALASTEPPGAQDSKGNKDRSNQIDRQLEDDQKKFRKECKILLLGSGESGKSTIVKQMKIIHQNGYSKDELLSFRGVIYKNVLDSAQALIMAMRKIGVDPEDANNRSYADRILEYRMDAGLDAVIPSEILYNIESLWHDPVIPSVMDRSSEFYLMDSATYFFANIRKIAGPDYVPDEADVLRARTKTTGISETRFNMGQLSIHMFDVGGQRSERKKWIHCFEAVTSIIFCVALSEYDQVLLEESGQNRMQESLVLFESVINSRWFLRTSVILFLNKIDLFKQKLPKVPLVQYFPEYTGGADINKAAKYILWRFTQTNRARLSVYPHLTQATDTSNIRLVFAAVKETILQNALRDSGIL.

The disordered stretch occupies residues 1–97; it reads MGGCMSTPEA…SKGNKDRSNQ (97 aa). G2 carries the N-myristoyl glycine lipid modification. The S-palmitoyl cysteine moiety is linked to residue C4. Low complexity predominate over residues 21–52; that stretch reads PSTSTSSRPPQASTSATATAAGAGTSAANGTA. The 322-residue stretch at 111-432 folds into the G-alpha domain; it reads KECKILLLGS…QNALRDSGIL (322 aa). The segment at 114–127 is G1 motif; that stretch reads KILLLGSGESGKST. The GTP site is built by E122, S123, G124, K125, S126, T127, D230, L255, T261, G283, N349, K350, D352, and A404. S126 is a binding site for Mg(2+). The tract at residues 253-261 is G2 motif; the sequence is DVLRARTKT. T261 serves as a coordination point for Mg(2+). The interval 276 to 285 is G3 motif; the sequence is IHMFDVGGQR. The interval 345-352 is G4 motif; sequence ILFLNKID. Positions 402-407 are G5 motif; the sequence is TQATDT.

The protein belongs to the G-alpha family. In terms of assembly, g proteins are composed of 3 units; alpha, beta and gamma. The alpha chain contains the guanine nucleotide binding site. The cofactor is Mg(2+).

Its function is as follows. Guanine nucleotide-binding proteins (G proteins) are involved as modulators or transducers in various transmembrane signaling systems. Involved in the mating pathway. This chain is Guanine nucleotide-binding protein subunit alpha (GPA1), found in Cryptococcus neoformans var. neoformans serotype D (strain B-3501A) (Filobasidiella neoformans).